Reading from the N-terminus, the 86-residue chain is Large ribosomal subunit protein eL20 (86 aa).

The protein belongs to the eukaryotic ribosomal protein eL20 family. Part of the 50S ribosomal subunit. Binds 23S rRNA.

This is Large ribosomal subunit protein eL20 from Sulfolobus acidocaldarius (strain ATCC 33909 / DSM 639 / JCM 8929 / NBRC 15157 / NCIMB 11770).